The following is a 165-amino-acid chain: Protein C2-DOMAIN ABA-RELATED 8 (165 aa).

Position 1 is an N-acetylmethionine (Met-1). Residues 1–106 (MENLVGLLRI…QGTDIQELTN (106 aa)) form the C2 domain. Positions 21, 22, 27, 73, 74, 75, and 81 each coordinate Ca(2+).

This sequence belongs to the plant CAR protein family. Binds to PYR/PYL/RCAR abscisic acid intracellular receptors in an ABA-independent manner, both at the plasma membrane and in the nucleus.

It localises to the cell membrane. Its subcellular location is the nucleus. Functionally, stimulates the GTPase/ATPase activities of Obg-like ATPases. Mediates the transient calcium-dependent interaction of PYR/PYL/RCAR abscisic acid (ABA) receptors with the plasma membrane and thus regulates ABA sensitivity. This is Protein C2-DOMAIN ABA-RELATED 8 from Arabidopsis thaliana (Mouse-ear cress).